Here is a 432-residue protein sequence, read N- to C-terminus: MLDAKYLRNDINIAAQKLEKRGYTLDVAQFTALEEKRKSLQMRTQELQNERNVRSKSIGKAKASGQDIEPLLAQVGQLGDELNAAKAELTGLLDEIQTLTLNIPNLPDDSVPEGKDEDENVEVSRWGTPREFDFEVKDHVDLGAGVANGLDFETATKLTGSRFVVMRGQIARLNRAIAQFMLDLHTEQHGYQEMYVPYLVNEESMLGTGQFPKFVGDAFHTKPATEEGQGLSLIPTSEVPLTNIARDCIFAANELPIKMTAHTPCFRSEAGSYGRDTRGLIRQHQFDKVEMVQLVEADKSFEALDELTGNAEKVLQLLELPYRKMLLCTGDMGFGACKTFDLEVWLPAQDTYREISSCSNMLDFQARRMQARYRDPQTNKTELLHTLNGSGLAVGRTLVAILENYQQADGSITIPEVLQPYMNGVTVIGAVK.

236-238 (TSE) contacts L-serine. Position 267–269 (267–269 (RSE)) interacts with ATP. Glutamate 290 is a binding site for L-serine. 354-357 (EISS) contributes to the ATP binding site. An L-serine-binding site is contributed by serine 390.

Belongs to the class-II aminoacyl-tRNA synthetase family. Type-1 seryl-tRNA synthetase subfamily. Homodimer. The tRNA molecule binds across the dimer.

It localises to the cytoplasm. It carries out the reaction tRNA(Ser) + L-serine + ATP = L-seryl-tRNA(Ser) + AMP + diphosphate + H(+). The catalysed reaction is tRNA(Sec) + L-serine + ATP = L-seryl-tRNA(Sec) + AMP + diphosphate + H(+). It functions in the pathway aminoacyl-tRNA biosynthesis; selenocysteinyl-tRNA(Sec) biosynthesis; L-seryl-tRNA(Sec) from L-serine and tRNA(Sec): step 1/1. Catalyzes the attachment of serine to tRNA(Ser). Is also able to aminoacylate tRNA(Sec) with serine, to form the misacylated tRNA L-seryl-tRNA(Sec), which will be further converted into selenocysteinyl-tRNA(Sec). This Pseudoalteromonas atlantica (strain T6c / ATCC BAA-1087) protein is Serine--tRNA ligase.